The chain runs to 4062 residues: Transcription-associated protein 1 (4062 aa).

The disordered stretch occupies residues 531-562; sequence LASEPSTSEDADESGGDPNKLPPPTKEGKKTS. 2 TPR repeats span residues 1346 to 1379 and 1677 to 1714; these read LDGV…LLDI and RRSF…DDEE. Over residues 2659-2670 the composition is skewed to basic and acidic residues; the sequence is VETEMKREEPEP. Residues 2659 to 2692 form a disordered region; that stretch reads VETEMKREEPEPMEVDEKDSQDDSKDAGEPKEKE. Acidic residues predominate over residues 2671–2680; the sequence is MEVDEKDSQD. Basic and acidic residues predominate over residues 2681–2692; the sequence is DSKDAGEPKEKE. The 612-residue stretch at 2800–3411 folds into the FAT domain; sequence LIEFISSKHE…FYHIREAVSV (612 aa). Residues 2847-2880 form a TPR 3 repeat; sequence IETLESLGTLYNEISEFDQFAAIWERRAVFPDTM. The 365-residue stretch at 3682–4046 folds into the PI3K/PI4K catalytic domain; it reads EPNFEIVIKG…DCVSLISRAK (365 aa). The tract at residues 3688–3694 is G-loop; sequence VIKGGQV. Residues 3902-3910 form a catalytic loop region; that stretch reads NLTPMGPDQ. The activation loop stretch occupies residues 3922–3950; it reads NPSYRFEIRGGRSLHDIQHFGHEVPFRLT. The region spanning 4031–4062 is the FATC domain; it reads AKLRKDDCVSLISRAKDSDNLARMPPTYHAWF.

It belongs to the PI3/PI4-kinase family. TRA1 subfamily. Interacts with histone acetyltransferase Tip60 homolog mys-1. Probably a component of a complex with histone acetyltransferase (HAT) activity, at least composed of mys-1 and trr-1. In terms of tissue distribution, expressed in germ cells and somatic cells.

It is found in the nucleus. Its subcellular location is the chromosome. In terms of biological role, influences germ cell fate in hermaphrodites. Acts downstream of tra-2 and tra-3 and through the Tip60 histone acetyltransferase complex to regulate germ cell fate decisions. Required for spermatogenesis and embryonic development. Acts with tra-2 to promote expression of fog-3 and control male tail development. Involved in the negative regulation of vulval development. Involved in the positive regulation of transcription factor daf-16, probably acting by histone acetylation; thereby modulating stress resistance. Plays a role in acetylation of nucleosomal histone H4, probably acting as a component of the Tip60 histone acetyltransferase complex. The sequence is that of Transcription-associated protein 1 from Caenorhabditis elegans.